We begin with the raw amino-acid sequence, 131 residues long: Small ribosomal subunit protein uS11 (131 aa).

The protein belongs to the universal ribosomal protein uS11 family. Part of the 30S ribosomal subunit. Interacts with proteins S7 and S18. Binds to IF-3.

Its function is as follows. Located on the platform of the 30S subunit, it bridges several disparate RNA helices of the 16S rRNA. Forms part of the Shine-Dalgarno cleft in the 70S ribosome. In Trichodesmium erythraeum (strain IMS101), this protein is Small ribosomal subunit protein uS11.